The chain runs to 227 residues: UPF0758 protein Rxyl_1530 (227 aa).

Positions 106–227 (VISSPADVDG…YFSMKEHGML (122 aa)) constitute an MPN domain. Zn(2+) is bound by residues H177, H179, and D190. The JAMM motif motif lies at 177-190 (HNHPSGRVEPSRED).

The protein belongs to the UPF0758 family.

This Rubrobacter xylanophilus (strain DSM 9941 / JCM 11954 / NBRC 16129 / PRD-1) protein is UPF0758 protein Rxyl_1530.